The chain runs to 60 residues: UPF0434 protein mma_2578 (60 aa).

It belongs to the UPF0434 family.

The chain is UPF0434 protein mma_2578 from Janthinobacterium sp. (strain Marseille) (Minibacterium massiliensis).